A 130-amino-acid polypeptide reads, in one-letter code: Large ribosomal subunit protein bL21 (130 aa).

Residues 110 to 130 are disordered; the sequence is TAPTATEETADATPDTETAAE.

It belongs to the bacterial ribosomal protein bL21 family. Part of the 50S ribosomal subunit. Contacts protein L20.

Its function is as follows. This protein binds to 23S rRNA in the presence of protein L20. This chain is Large ribosomal subunit protein bL21, found in Nostoc sp. (strain PCC 7120 / SAG 25.82 / UTEX 2576).